The following is a 350-amino-acid chain: MPQPAPLDFVVVGLNHQTAPVEVRERVAVRPEEEGALLGHLARHADEVLLLATCNRTEVYLAGVHGDPLAAFEGAWGHALLDHLYVYRGEAAVRHLYRVTAGLDSLVIGETQIQGQVKRAWQSARERGLSGTLMNKVVQGALAAGKRVRSHTGLSDKVVSVSSAAVELAQAALGELSQRRALILGAGETAELTLTHLRAAGVQDVLVVNRTAERARALAEKLGGRACPAEELSAALPEVDVVIASSAAPHYVVTAQNVREALAGRPGRAMFLIDISVPRILDPEIASVPGAHLYNLDDLTAVVQRNMQSRRAALPQAEAIIRELGSDLSRWYLTRETQLARQAELALACD.

Residues 53-56 (TCNR), S105, 110-112 (ETQ), and Q116 each bind substrate. C54 functions as the Nucleophile in the catalytic mechanism. Residue 185–190 (GAGETA) participates in NADP(+) binding.

This sequence belongs to the glutamyl-tRNA reductase family. In terms of assembly, homodimer.

The catalysed reaction is (S)-4-amino-5-oxopentanoate + tRNA(Glu) + NADP(+) = L-glutamyl-tRNA(Glu) + NADPH + H(+). The protein operates within porphyrin-containing compound metabolism; protoporphyrin-IX biosynthesis; 5-aminolevulinate from L-glutamyl-tRNA(Glu): step 1/2. Catalyzes the NADPH-dependent reduction of glutamyl-tRNA(Glu) to glutamate 1-semialdehyde (GSA). This is Glutamyl-tRNA reductase from Deinococcus radiodurans (strain ATCC 13939 / DSM 20539 / JCM 16871 / CCUG 27074 / LMG 4051 / NBRC 15346 / NCIMB 9279 / VKM B-1422 / R1).